The chain runs to 1014 residues: Isoleucine--tRNA ligase (1014 aa).

Residues 48–58 (PTANGRPGIHH) carry the 'HIGH' region motif. Residues 628 to 632 (KMSKS) carry the 'KMSKS' region motif. Lysine 631 provides a ligand contact to ATP.

This sequence belongs to the class-I aminoacyl-tRNA synthetase family. IleS type 2 subfamily. As to quaternary structure, monomer. The cofactor is Zn(2+).

It localises to the cytoplasm. The catalysed reaction is tRNA(Ile) + L-isoleucine + ATP = L-isoleucyl-tRNA(Ile) + AMP + diphosphate. Its function is as follows. Catalyzes the attachment of isoleucine to tRNA(Ile). As IleRS can inadvertently accommodate and process structurally similar amino acids such as valine, to avoid such errors it has two additional distinct tRNA(Ile)-dependent editing activities. One activity is designated as 'pretransfer' editing and involves the hydrolysis of activated Val-AMP. The other activity is designated 'posttransfer' editing and involves deacylation of mischarged Val-tRNA(Ile). The sequence is that of Isoleucine--tRNA ligase from Dehalococcoides mccartyi (strain CBDB1).